We begin with the raw amino-acid sequence, 402 residues long: Phosphoglycerate kinase (402 aa).

Residues Asp21–Asn23, Arg36, His59–Arg62, Arg119, and Arg154 contribute to the substrate site. ATP is bound by residues Lys207, Gly298, Glu329, and Gly356–Ala359.

It belongs to the phosphoglycerate kinase family. Monomer.

It localises to the cytoplasm. It catalyses the reaction (2R)-3-phosphoglycerate + ATP = (2R)-3-phospho-glyceroyl phosphate + ADP. It participates in carbohydrate degradation; glycolysis; pyruvate from D-glyceraldehyde 3-phosphate: step 2/5. The sequence is that of Phosphoglycerate kinase (pgk) from Chlamydia pneumoniae (Chlamydophila pneumoniae).